A 46-amino-acid chain; its full sequence is Large ribosomal subunit protein bL36 (46 aa).

It belongs to the bacterial ribosomal protein bL36 family.

The chain is Large ribosomal subunit protein bL36 from Serratia proteamaculans (strain 568).